We begin with the raw amino-acid sequence, 1127 residues long: Structural protein MDM1 (1127 aa).

One can recognise a PXA domain in the interval 85–273 (NAQIGKELES…WNLRIVSLSQ (189 aa)). Serine 670, serine 673, and serine 692 each carry phosphoserine. Positions 705-762 (SNNFRDNIASLTISIDQIEKELELLRHLILKADLTNNQMQLKILKKSQRTLLKELEMK) form a coiled coil. The region spanning 782–905 (TKIYIRSYFS…RFLTDPTPFK (124 aa)) is the PX domain.

It belongs to the sorting nexin family.

It is found in the cytoplasm. In terms of biological role, essential for mitotic growth. Mediates organelle inheritance. In Saccharomyces cerevisiae (strain ATCC 204508 / S288c) (Baker's yeast), this protein is Structural protein MDM1 (MDM1).